A 547-amino-acid polypeptide reads, in one-letter code: G protein-coupled receptor associated sorting protein 3 (547 aa).

Over residues 1-10 (MAGTKNKTRA) the composition is skewed to basic residues. 2 disordered regions span residues 1 to 32 (MAGT…EATG) and 80 to 102 (TLGK…STCK).

This sequence belongs to the GPRASP family. In terms of assembly, homodimer. As to expression, highly expressed in brain. Not expressed in lung or liver. Down-regulated in brain from patients suffering from Alzheimer disease.

It localises to the cytoplasm. The protein localises to the nucleus. Functionally, survival and differentiation promoting protein that plays a role in the regulation of neurosynaptogenesis. Induces phosphatase PP2A activity which results in APP dephosphorylation and inhibits BACE1-mediated processing of APP. In Homo sapiens (Human), this protein is G protein-coupled receptor associated sorting protein 3.